Here is a 736-residue protein sequence, read N- to C-terminus: Microtubule-associated protein mu-2 (736 aa).

It belongs to the orthoreovirus mu-2 protein family. Interacts with protein mu-NS; in viral inclusions. Interacts with polymerase lambda-3; this interaction stimulates the ATPase activity of mu-2. The cofactor is a divalent metal cation.

The protein localises to the virion. Its subcellular location is the host cytoplasm. It is found in the host cytoskeleton. In terms of biological role, minor inner capsid (core) component. Displays NTPase and RNA 5'-triphosphatase (RTPase) activities. ATP is the preferred substrate for hydrolysis. May function as a cofactor of polymerase lambda-3. Associates with microtubules and plays a role in the formation, structural organization and morphology of viral inclusions, where the assembly of cores and the replication of viral RNA occur. Together with mu-NS, recruits the other core proteins to these inclusions. This is Microtubule-associated protein mu-2 (M1) from Mammalia (T2J).